The sequence spans 473 residues: Ribulose bisphosphate carboxylase large chain (473 aa).

Positions 1–2 (MS) are excised as a propeptide. Pro3 is subject to N-acetylproline. At Lys14 the chain carries N6,N6,N6-trimethyllysine. The substrate site is built by Asn123 and Thr173. Residue Lys175 is the Proton acceptor of the active site. A substrate-binding site is contributed by Lys177. Mg(2+) is bound by residues Lys201, Asp203, and Glu204. Lys201 bears the N6-carboxylysine mark. The active-site Proton acceptor is His294. Substrate contacts are provided by Arg295, His327, and Ser379.

The protein belongs to the RuBisCO large chain family. Type I subfamily. In terms of assembly, heterohexadecamer of 8 large chains and 8 small chains; disulfide-linked. The disulfide link is formed within the large subunit homodimers. Mg(2+) serves as cofactor. The disulfide bond which can form in the large chain dimeric partners within the hexadecamer appears to be associated with oxidative stress and protein turnover.

It localises to the plastid. Its subcellular location is the chloroplast. It catalyses the reaction 2 (2R)-3-phosphoglycerate + 2 H(+) = D-ribulose 1,5-bisphosphate + CO2 + H2O. The enzyme catalyses D-ribulose 1,5-bisphosphate + O2 = 2-phosphoglycolate + (2R)-3-phosphoglycerate + 2 H(+). Functionally, ruBisCO catalyzes two reactions: the carboxylation of D-ribulose 1,5-bisphosphate, the primary event in carbon dioxide fixation, as well as the oxidative fragmentation of the pentose substrate in the photorespiration process. Both reactions occur simultaneously and in competition at the same active site. In Vigna unguiculata (Cowpea), this protein is Ribulose bisphosphate carboxylase large chain.